The chain runs to 349 residues: Twinfilin-2-B (349 aa).

ADF-H domains lie at 4-139 (QTGI…KHVS) and 177-313 (GLSF…DEVH). Residues 321–349 (QAFAKPKGPAGKRGQKRLIKGPGENGEDS) are disordered.

This sequence belongs to the actin-binding proteins ADF family. Twinfilin subfamily. As to quaternary structure, interacts with G-actin; ADP-actin form and capping protein (CP).

It localises to the cytoplasm. It is found in the cytoskeleton. The protein localises to the perinuclear region. Actin-binding protein involved in motile and morphological processes. Inhibits actin polymerization, likely by sequestering G-actin. This chain is Twinfilin-2-B (twf2-b), found in Xenopus laevis (African clawed frog).